The primary structure comprises 378 residues: Ret finger protein-like 2 (378 aa).

The RING-type; degenerate zinc finger occupies 101–143 (CPVCSDYLEKPMSLECGCAVCLKCINSLQKEPHGEDLLCCCSS). Residues 168 to 362 (EPKLKKILQM…DQGVLSICPL (195 aa)) form the B30.2/SPRY domain.

Seems to be expressed in prostate and less abundantly in adult brain, fetal liver, and fetal kidney.

This Homo sapiens (Human) protein is Ret finger protein-like 2 (RFPL2).